A 545-amino-acid chain; its full sequence is Pentatricopeptide repeat-containing protein At4g18840 (545 aa).

11 PPR repeats span residues 104–138 (NGFTHNSVIRAYANSSTPEVALTVFREMLLGPVFP), 139–173 (DKYSFTFVLKACAAFCGFEEGRQIHGLFIKSGLVT), 174–204 (DVFVENTLVNVYGRSGYFEIARKVLDRMPVR), 205–239 (DAVSWNSLLSAYLEKGLVDEARALFDEMEERNVES), 240–266 (WNFMISGYAAAGLVKEAKEVFDSMPVR), 267–301 (DVVSWNAMVTAYAHVGCYNEVLEVFNKMLDDSTEK), 303–337 (DGFTLVSVLSACASLGSLSQGEWVHVYIDKHGIEI), 338–368 (EGFLATALVDMYSKCGKIDKALEVFRATSKR), 369–403 (DVSTWNSIISDLSVHGLGKDALEIFSEMVYEGFKP), 404–434 (NGITFIGVLSACNHVGMLDQARKLFEMMSSV), and 440–474 (TIEHYGCMVDLLGRMGKIEEAEELVNEIPADEASI). The tract at residues 475-545 (LLESLLGACK…ERVNRSLDVA (71 aa)) is type E motif.

This sequence belongs to the PPR family. PCMP-E subfamily.

This Arabidopsis thaliana (Mouse-ear cress) protein is Pentatricopeptide repeat-containing protein At4g18840 (PCMP-E101).